The sequence spans 190 residues: C-type lectin domain family 5 member A (190 aa).

Residues 1-4 are Cytoplasmic-facing; the sequence is MNWH. A helical; Signal-anchor for type II membrane protein membrane pass occupies residues 5–25; sequence MIISGLIVVVIKVVGMTFFLL. The Extracellular segment spans residues 26–190; the sequence is YFPQVFGKSN…YRWICEMNAK (165 aa). 3 N-linked (GlcNAc...) asparagine glycosylation sites follow: asparagine 51, asparagine 146, and asparagine 153. Positions 80–186 constitute a C-type lectin domain; sequence HQGKCFFFSF…CEVSYRWICE (107 aa). 2 disulfides stabilise this stretch: cysteine 101–cysteine 185 and cysteine 163–cysteine 177.

Monomer. Homodimer. The majority of CLEC5A is expressed as a monomeric form on macrophages. Interacts with TYROBP/DAP12. The interaction with TYROBP is required for CLEC5 cell surface expression. Interacts with HCST/DAP10. Forms a CLEC5A/TYROBP/HCST trimolecular complex depending almost solely on TYROBP. Post-translationally, N-glycosylated. Contains sialic acid residues. Strong expression in bone marrow cells and thioglycollate-induced neutrophils (at protein level). Expressed on granulocytes and monocytes from bone marrow and peripheral blood. Expressed in macrophage cell line J-774, but not in T-cell lines, B-cell lines, or mast cell lines.

Its subcellular location is the cell membrane. In terms of biological role, functions as a positive regulator of osteoclastogenesis. Cell surface receptor that signals via TYROBP. Regulates inflammatory responses. In Mus musculus (Mouse), this protein is C-type lectin domain family 5 member A (Clec5a).